Here is a 98-residue protein sequence, read N- to C-terminus: NADH-ubiquinone oxidoreductase chain 4L (98 aa).

The next 3 helical transmembrane spans lie at 1 to 21 (MTSTFIITITIFYLGLLGILI), 29 to 49 (ILLCLELLLISLFLSLTVWAI), and 61 to 81 (LILLTLSACEASAGLSLMVAL).

Belongs to the complex I subunit 4L family.

Its subcellular location is the mitochondrion membrane. The enzyme catalyses a ubiquinone + NADH + 5 H(+)(in) = a ubiquinol + NAD(+) + 4 H(+)(out). Core subunit of the mitochondrial membrane respiratory chain NADH dehydrogenase (Complex I) that is believed to belong to the minimal assembly required for catalysis. Complex I functions in the transfer of electrons from NADH to the respiratory chain. The immediate electron acceptor for the enzyme is believed to be ubiquinone. The sequence is that of NADH-ubiquinone oxidoreductase chain 4L (ND4L) from Patiria pectinifera (Starfish).